Consider the following 368-residue polypeptide: S-adenosylmethionine decarboxylase proenzyme (368 aa).

Active-site residues include Glu26 and Glu29. Catalysis depends on Ser83, which acts as the Schiff-base intermediate with substrate; via pyruvic acid. At Ser83 the chain carries Pyruvic acid (Ser); by autocatalysis. Cys97 (proton donor; for catalytic activity) is an active-site residue. Active-site proton acceptor; for processing activity residues include Ser246 and His261.

It belongs to the eukaryotic AdoMetDC family. In terms of assembly, heterotetramer of two alpha and two beta chains. Requires pyruvate as cofactor. Is synthesized initially as an inactive proenzyme. Formation of the active enzyme involves a self-maturation process in which the active site pyruvoyl group is generated from an internal serine residue via an autocatalytic post-translational modification. Two non-identical subunits are generated from the proenzyme in this reaction, and the pyruvate is formed at the N-terminus of the alpha chain, which is derived from the carboxyl end of the proenzyme. The post-translation cleavage follows an unusual pathway, termed non-hydrolytic serinolysis, in which the side chain hydroxyl group of the serine supplies its oxygen atom to form the C-terminus of the beta chain, while the remainder of the serine residue undergoes an oxidative deamination to produce ammonia and the pyruvoyl group blocking the N-terminus of the alpha chain.

It carries out the reaction S-adenosyl-L-methionine + H(+) = S-adenosyl 3-(methylsulfanyl)propylamine + CO2. The protein operates within amine and polyamine biosynthesis; S-adenosylmethioninamine biosynthesis; S-adenosylmethioninamine from S-adenosyl-L-methionine: step 1/1. Functionally, essential for biosynthesis of the polyamines spermidine and spermine. Polyamines are essential for cell proliferation and are implicated in cellular processes, ranging from DNA replication to apoptosis. This Caenorhabditis elegans protein is S-adenosylmethionine decarboxylase proenzyme.